A 275-amino-acid polypeptide reads, in one-letter code: Dermonecrotic toxin SpeSicTox-betaIIA3i (275 aa).

His5 is an active-site residue. 2 residues coordinate Mg(2+): Glu25 and Asp27. Residue His41 is the Nucleophile of the active site. Disulfide bonds link Cys45–Cys51 and Cys47–Cys190. Residue Asp85 coordinates Mg(2+).

Belongs to the arthropod phospholipase D family. Class II subfamily. Mg(2+) is required as a cofactor. As to expression, expressed by the venom gland.

It is found in the secreted. The catalysed reaction is an N-(acyl)-sphingosylphosphocholine = an N-(acyl)-sphingosyl-1,3-cyclic phosphate + choline. The enzyme catalyses an N-(acyl)-sphingosylphosphoethanolamine = an N-(acyl)-sphingosyl-1,3-cyclic phosphate + ethanolamine. It carries out the reaction a 1-acyl-sn-glycero-3-phosphocholine = a 1-acyl-sn-glycero-2,3-cyclic phosphate + choline. It catalyses the reaction a 1-acyl-sn-glycero-3-phosphoethanolamine = a 1-acyl-sn-glycero-2,3-cyclic phosphate + ethanolamine. Functionally, dermonecrotic toxins cleave the phosphodiester linkage between the phosphate and headgroup of certain phospholipids (sphingolipid and lysolipid substrates), forming an alcohol (often choline) and a cyclic phosphate. This toxin acts on sphingomyelin (SM). It may also act on ceramide phosphoethanolamine (CPE), lysophosphatidylcholine (LPC) and lysophosphatidylethanolamine (LPE), but not on lysophosphatidylserine (LPS), and lysophosphatidylglycerol (LPG). It acts by transphosphatidylation, releasing exclusively cyclic phosphate products as second products. Induces dermonecrosis, hemolysis, increased vascular permeability, edema, inflammatory response, and platelet aggregation. The polypeptide is Dermonecrotic toxin SpeSicTox-betaIIA3i (Sicarius peruensis (Six-eyed sand spider)).